We begin with the raw amino-acid sequence, 234 residues long: Urease accessory protein UreG 1 (234 aa).

The tract at residues 1 to 29 is disordered; the sequence is MTRTPTGVPMHLGHTHDAPAAVSADATRP. 42 to 49 lines the GTP pocket; that stretch reads GPVGSGKT.

Belongs to the SIMIBI class G3E GTPase family. UreG subfamily. In terms of assembly, homodimer. UreD, UreF and UreG form a complex that acts as a GTP-hydrolysis-dependent molecular chaperone, activating the urease apoprotein by helping to assemble the nickel containing metallocenter of UreC. The UreE protein probably delivers the nickel.

The protein localises to the cytoplasm. Functionally, facilitates the functional incorporation of the urease nickel metallocenter. This process requires GTP hydrolysis, probably effectuated by UreG. The protein is Urease accessory protein UreG 1 of Streptomyces griseus subsp. griseus (strain JCM 4626 / CBS 651.72 / NBRC 13350 / KCC S-0626 / ISP 5235).